We begin with the raw amino-acid sequence, 239 residues long: Protein GrpE (239 aa).

Disordered regions lie at residues Met1–Lys53 and Gly210–Asn239. 2 stretches are compositionally biased toward basic and acidic residues: residues Asn34–Lys53 and Ser219–Asp230.

It belongs to the GrpE family. Homodimer.

The protein localises to the cytoplasm. Participates actively in the response to hyperosmotic and heat shock by preventing the aggregation of stress-denatured proteins, in association with DnaK and GrpE. It is the nucleotide exchange factor for DnaK and may function as a thermosensor. Unfolded proteins bind initially to DnaJ; upon interaction with the DnaJ-bound protein, DnaK hydrolyzes its bound ATP, resulting in the formation of a stable complex. GrpE releases ADP from DnaK; ATP binding to DnaK triggers the release of the substrate protein, thus completing the reaction cycle. Several rounds of ATP-dependent interactions between DnaJ, DnaK and GrpE are required for fully efficient folding. This Prochlorococcus marinus (strain MIT 9515) protein is Protein GrpE.